Here is a 38-residue protein sequence, read N- to C-terminus: Cytochrome b6-f complex subunit 5 (38 aa).

A helical transmembrane segment spans residues Leu5–Ala25.

This sequence belongs to the PetG family. In terms of assembly, the 4 large subunits of the cytochrome b6-f complex are cytochrome b6, subunit IV (17 kDa polypeptide, PetD), cytochrome f and the Rieske protein, while the 4 small subunits are PetG, PetL, PetM and PetN. The complex functions as a dimer.

The protein resides in the cellular thylakoid membrane. In terms of biological role, component of the cytochrome b6-f complex, which mediates electron transfer between photosystem II (PSII) and photosystem I (PSI), cyclic electron flow around PSI, and state transitions. PetG is required for either the stability or assembly of the cytochrome b6-f complex. This Parasynechococcus marenigrum (strain WH8102) protein is Cytochrome b6-f complex subunit 5.